The sequence spans 34 residues: Photosystem II reaction center protein M (34 aa).

A helical transmembrane segment spans residues 5–25 (ILAFIATALFILVPTAFLLII).

This sequence belongs to the PsbM family. PSII is composed of 1 copy each of membrane proteins PsbA, PsbB, PsbC, PsbD, PsbE, PsbF, PsbH, PsbI, PsbJ, PsbK, PsbL, PsbM, PsbT, PsbX, PsbY, PsbZ, Psb30/Ycf12, at least 3 peripheral proteins of the oxygen-evolving complex and a large number of cofactors. It forms dimeric complexes.

It localises to the plastid. The protein localises to the chloroplast thylakoid membrane. One of the components of the core complex of photosystem II (PSII). PSII is a light-driven water:plastoquinone oxidoreductase that uses light energy to abstract electrons from H(2)O, generating O(2) and a proton gradient subsequently used for ATP formation. It consists of a core antenna complex that captures photons, and an electron transfer chain that converts photonic excitation into a charge separation. This subunit is found at the monomer-monomer interface. The chain is Photosystem II reaction center protein M from Calycanthus floridus var. glaucus (Eastern sweetshrub).